Consider the following 542-residue polypeptide: Chaperonin GroEL (542 aa).

ATP is bound by residues 29-32 (TLGP), 86-90 (DGTTT), G414, and D491.

The protein belongs to the chaperonin (HSP60) family. Forms a cylinder of 14 subunits composed of two heptameric rings stacked back-to-back. Interacts with the co-chaperonin GroES.

The protein localises to the cytoplasm. The enzyme catalyses ATP + H2O + a folded polypeptide = ADP + phosphate + an unfolded polypeptide.. In terms of biological role, together with its co-chaperonin GroES, plays an essential role in assisting protein folding. The GroEL-GroES system forms a nano-cage that allows encapsulation of the non-native substrate proteins and provides a physical environment optimized to promote and accelerate protein folding. The protein is Chaperonin GroEL of Desulforamulus reducens (strain ATCC BAA-1160 / DSM 100696 / MI-1) (Desulfotomaculum reducens).